The chain runs to 187 residues: Large ribosomal subunit protein bL21 (187 aa).

Positions 157 to 187 are disordered; the sequence is KVAKKAVKKTVKKATKTGAKKKAAKKTSKKA.

The protein belongs to the bacterial ribosomal protein bL21 family. In terms of assembly, part of the 50S ribosomal subunit. Contacts protein L20.

Functionally, this protein binds to 23S rRNA in the presence of protein L20. This chain is Large ribosomal subunit protein bL21, found in Bdellovibrio bacteriovorus (strain ATCC 15356 / DSM 50701 / NCIMB 9529 / HD100).